The sequence spans 620 residues: 1-deoxy-D-xylulose-5-phosphate synthase (620 aa).

Residues His-80 and 121–123 each bind thiamine diphosphate; that span reads GHS. Residue Asp-152 participates in Mg(2+) binding. Thiamine diphosphate is bound by residues 153-154, Asn-181, Tyr-288, and Glu-370; that span reads GA. Asn-181 contacts Mg(2+).

This sequence belongs to the transketolase family. DXPS subfamily. As to quaternary structure, homodimer. Requires Mg(2+) as cofactor. Thiamine diphosphate is required as a cofactor.

It catalyses the reaction D-glyceraldehyde 3-phosphate + pyruvate + H(+) = 1-deoxy-D-xylulose 5-phosphate + CO2. The protein operates within metabolic intermediate biosynthesis; 1-deoxy-D-xylulose 5-phosphate biosynthesis; 1-deoxy-D-xylulose 5-phosphate from D-glyceraldehyde 3-phosphate and pyruvate: step 1/1. Functionally, catalyzes the acyloin condensation reaction between C atoms 2 and 3 of pyruvate and glyceraldehyde 3-phosphate to yield 1-deoxy-D-xylulose-5-phosphate (DXP). This is 1-deoxy-D-xylulose-5-phosphate synthase from Shigella flexneri.